Reading from the N-terminus, the 209-residue chain is Shikimate kinase (209 aa).

47 to 52 contacts ATP; that stretch reads GAGKTT. T51 is a binding site for Mg(2+). 3 residues coordinate substrate: D69, R93, and G115. R153 is an ATP binding site. R172 is a binding site for substrate.

This sequence belongs to the shikimate kinase family. As to quaternary structure, monomer. It depends on Mg(2+) as a cofactor.

It localises to the cytoplasm. It catalyses the reaction shikimate + ATP = 3-phosphoshikimate + ADP + H(+). It functions in the pathway metabolic intermediate biosynthesis; chorismate biosynthesis; chorismate from D-erythrose 4-phosphate and phosphoenolpyruvate: step 5/7. Functionally, catalyzes the specific phosphorylation of the 3-hydroxyl group of shikimic acid using ATP as a cosubstrate. This chain is Shikimate kinase, found in Bordetella avium (strain 197N).